A 240-amino-acid chain; its full sequence is Probable transcriptional regulatory protein BLi02909/BL01150 (240 aa).

The span at M1–K14 shows a compositional bias: basic residues. Residues M1 to R21 form a disordered region.

The protein belongs to the TACO1 family.

It localises to the cytoplasm. The protein is Probable transcriptional regulatory protein BLi02909/BL01150 of Bacillus licheniformis (strain ATCC 14580 / DSM 13 / JCM 2505 / CCUG 7422 / NBRC 12200 / NCIMB 9375 / NCTC 10341 / NRRL NRS-1264 / Gibson 46).